The chain runs to 81 residues: ATP synthase subunit c, chloroplastic (81 aa).

Transmembrane regions (helical) follow at residues 3 to 23 (PLIS…ASIG) and 57 to 77 (LAFM…LLFA).

The protein belongs to the ATPase C chain family. As to quaternary structure, F-type ATPases have 2 components, F(1) - the catalytic core - and F(0) - the membrane proton channel. F(1) has five subunits: alpha(3), beta(3), gamma(1), delta(1), epsilon(1). F(0) has four main subunits: a(1), b(1), b'(1) and c(10-14). The alpha and beta chains form an alternating ring which encloses part of the gamma chain. F(1) is attached to F(0) by a central stalk formed by the gamma and epsilon chains, while a peripheral stalk is formed by the delta, b and b' chains.

The protein localises to the plastid. It localises to the chloroplast thylakoid membrane. Functionally, f(1)F(0) ATP synthase produces ATP from ADP in the presence of a proton or sodium gradient. F-type ATPases consist of two structural domains, F(1) containing the extramembraneous catalytic core and F(0) containing the membrane proton channel, linked together by a central stalk and a peripheral stalk. During catalysis, ATP synthesis in the catalytic domain of F(1) is coupled via a rotary mechanism of the central stalk subunits to proton translocation. In terms of biological role, key component of the F(0) channel; it plays a direct role in translocation across the membrane. A homomeric c-ring of between 10-14 subunits forms the central stalk rotor element with the F(1) delta and epsilon subunits. This is ATP synthase subunit c, chloroplastic from Ceratophyllum demersum (Rigid hornwort).